The following is a 176-amino-acid chain: MKNKHPLSKDELQLFRESVVDAKKLRQDTIVHRKPKPKTKQIAPQRLLQEQVDASHYFSDEYQPQLEEEGPTRYVRPGYSAFELKKLRRGDYSPELFLDLHGLTQMQAKQELGALIAACRREHVHCACVMHGHGKHILKQQTPLWLAQHPDVLVFHQAPKEWGGTAAILLLVELAE.

Positions 98–173 (LDLHGLTQMQ…GTAAILLLVE (76 aa)) constitute a Smr domain.

Belongs to the SmrB family. Associates with collided ribosomes, but not with correctly translating polysomes.

Acts as a ribosome collision sensor. Detects stalled/collided disomes (pairs of ribosomes where the leading ribosome is stalled and a second ribosome has collided with it) and endonucleolytically cleaves mRNA at the 5' boundary of the stalled ribosome. Stalled/collided disomes form a new interface (primarily via the 30S subunits) that binds SmrB. Cleaved mRNA becomes available for tmRNA ligation, leading to ribosomal subunit dissociation and rescue of stalled ribosomes. This is Ribosome rescue factor SmrB from Serratia proteamaculans (strain 568).